Consider the following 160-residue polypeptide: 2-C-methyl-D-erythritol 2,4-cyclodiphosphate synthase (160 aa).

The a divalent metal cation site is built by aspartate 11 and histidine 13. 4-CDP-2-C-methyl-D-erythritol 2-phosphate contacts are provided by residues 11-13 (DVH) and 37-38 (HS). Position 45 (histidine 45) interacts with a divalent metal cation. Residues 59-61 (DIG), 64-68 (FPDTD), 135-138 (TTTE), phenylalanine 142, and arginine 145 each bind 4-CDP-2-C-methyl-D-erythritol 2-phosphate.

The protein belongs to the IspF family. In terms of assembly, homotrimer. A divalent metal cation serves as cofactor.

The catalysed reaction is 4-CDP-2-C-methyl-D-erythritol 2-phosphate = 2-C-methyl-D-erythritol 2,4-cyclic diphosphate + CMP. Its pathway is isoprenoid biosynthesis; isopentenyl diphosphate biosynthesis via DXP pathway; isopentenyl diphosphate from 1-deoxy-D-xylulose 5-phosphate: step 4/6. In terms of biological role, involved in the biosynthesis of isopentenyl diphosphate (IPP) and dimethylallyl diphosphate (DMAPP), two major building blocks of isoprenoid compounds. Catalyzes the conversion of 4-diphosphocytidyl-2-C-methyl-D-erythritol 2-phosphate (CDP-ME2P) to 2-C-methyl-D-erythritol 2,4-cyclodiphosphate (ME-CPP) with a corresponding release of cytidine 5-monophosphate (CMP). The polypeptide is 2-C-methyl-D-erythritol 2,4-cyclodiphosphate synthase (Alcanivorax borkumensis (strain ATCC 700651 / DSM 11573 / NCIMB 13689 / SK2)).